The chain runs to 123 residues: Large ribosomal subunit protein bL19 (123 aa).

It belongs to the bacterial ribosomal protein bL19 family.

Its function is as follows. This protein is located at the 30S-50S ribosomal subunit interface and may play a role in the structure and function of the aminoacyl-tRNA binding site. This Laribacter hongkongensis (strain HLHK9) protein is Large ribosomal subunit protein bL19.